A 63-amino-acid chain; its full sequence is Small ribosomal subunit protein eS17 (63 aa).

The protein belongs to the eukaryotic ribosomal protein eS17 family.

The chain is Small ribosomal subunit protein eS17 (rps17e) from Haloarcula marismortui (strain ATCC 43049 / DSM 3752 / JCM 8966 / VKM B-1809) (Halobacterium marismortui).